A 152-amino-acid chain; its full sequence is Small ribosomal subunit protein uS13z/uS13y/uS13x (152 aa).

An N-acetylserine modification is found at Ser-2.

Belongs to the universal ribosomal protein uS13 family.

It localises to the cytoplasm. In terms of biological role, located at the top of the head of the 40S subunit, it contacts several helices of the 18S rRNA. The protein is Small ribosomal subunit protein uS13z/uS13y/uS13x (RPS18A) of Arabidopsis thaliana (Mouse-ear cress).